The sequence spans 432 residues: Enolase (432 aa).

Gln-167 contacts (2R)-2-phosphoglycerate. The Proton donor role is filled by Glu-209. Mg(2+)-binding residues include Asp-246, Glu-291, and Asp-318. (2R)-2-phosphoglycerate-binding residues include Lys-343, Arg-372, Ser-373, and Lys-394. Lys-343 functions as the Proton acceptor in the catalytic mechanism.

Belongs to the enolase family. Component of the RNA degradosome, a multiprotein complex involved in RNA processing and mRNA degradation. It depends on Mg(2+) as a cofactor.

It is found in the cytoplasm. The protein resides in the secreted. Its subcellular location is the cell surface. The enzyme catalyses (2R)-2-phosphoglycerate = phosphoenolpyruvate + H2O. It participates in carbohydrate degradation; glycolysis; pyruvate from D-glyceraldehyde 3-phosphate: step 4/5. Its function is as follows. Catalyzes the reversible conversion of 2-phosphoglycerate (2-PG) into phosphoenolpyruvate (PEP). It is essential for the degradation of carbohydrates via glycolysis. This chain is Enolase, found in Aliivibrio fischeri (strain ATCC 700601 / ES114) (Vibrio fischeri).